The primary structure comprises 375 residues: Succinyl-diaminopimelate desuccinylase (375 aa).

A Zn(2+)-binding site is contributed by His-66. Asp-68 is a catalytic residue. Zn(2+) is bound at residue Asp-99. Glu-133 acts as the Proton acceptor in catalysis. Zn(2+) is bound by residues Glu-134, Glu-162, and His-348.

The protein belongs to the peptidase M20A family. DapE subfamily. Homodimer. Requires Zn(2+) as cofactor. Co(2+) is required as a cofactor.

The enzyme catalyses N-succinyl-(2S,6S)-2,6-diaminopimelate + H2O = (2S,6S)-2,6-diaminopimelate + succinate. It participates in amino-acid biosynthesis; L-lysine biosynthesis via DAP pathway; LL-2,6-diaminopimelate from (S)-tetrahydrodipicolinate (succinylase route): step 3/3. In terms of biological role, catalyzes the hydrolysis of N-succinyl-L,L-diaminopimelic acid (SDAP), forming succinate and LL-2,6-diaminopimelate (DAP), an intermediate involved in the bacterial biosynthesis of lysine and meso-diaminopimelic acid, an essential component of bacterial cell walls. The chain is Succinyl-diaminopimelate desuccinylase from Klebsiella pneumoniae subsp. pneumoniae (strain ATCC 700721 / MGH 78578).